A 479-amino-acid chain; its full sequence is Probable polyamine transporter At3g19553 (479 aa).

12 consecutive transmembrane segments (helical) span residues 22-42, 53-73, 86-106, 130-150, 160-180, 236-256, 275-295, 304-324, 332-352, 355-375, 395-415, and 420-440; these read LTLL…PFGV, LLAL…EALV, GYVV…EGFW, FPVL…TFSL, IVGF…VVMA, ALFG…MAGT, VGML…AAMS, MSSD…PAFF, TPTI…WMSF, IIEF…AAFV, FGVS…MVLA, and FLIS…LTLV. Residues 454-479 are disordered; sequence RPVSGVSSESQLDEEHGDESAASLLP.

The protein belongs to the amino acid-polyamine-organocation (APC) superfamily. Polyamine:cation symporter (PHS) (TC 2.A.3.12) family.

The protein localises to the cell membrane. Functionally, probable cell membrane polyamine/proton symporter involved in the polyamine uptake in cells. This is Probable polyamine transporter At3g19553 from Arabidopsis thaliana (Mouse-ear cress).